Consider the following 411-residue polypeptide: Tyrosine--tRNA ligase (411 aa).

Residue tyrosine 34 coordinates L-tyrosine. A 'HIGH' region motif is present at residues 39-48 (CTATSLHIGS). Residues tyrosine 171 and glutamine 175 each coordinate L-tyrosine. Positions 231 to 235 (KMGKT) match the 'KMSKS' region motif. An ATP-binding site is contributed by lysine 234. The region spanning 345 to 411 (ISAYELFYEA…GKKRHILVRV (67 aa)) is the S4 RNA-binding domain.

It belongs to the class-I aminoacyl-tRNA synthetase family. TyrS type 1 subfamily. Homodimer.

The protein localises to the cytoplasm. It carries out the reaction tRNA(Tyr) + L-tyrosine + ATP = L-tyrosyl-tRNA(Tyr) + AMP + diphosphate + H(+). In terms of biological role, catalyzes the attachment of tyrosine to tRNA(Tyr) in a two-step reaction: tyrosine is first activated by ATP to form Tyr-AMP and then transferred to the acceptor end of tRNA(Tyr). This is Tyrosine--tRNA ligase from Rickettsia rickettsii (strain Sheila Smith).